A 612-amino-acid chain; its full sequence is Sulfite reductase [NADPH] hemoprotein beta-component (612 aa).

A disordered region spans residues M1 to E26. The [4Fe-4S] cluster site is built by C469, C475, C514, and C518. Position 518 (C518) interacts with siroheme.

Belongs to the nitrite and sulfite reductase 4Fe-4S domain family. Alpha(8)-beta(8). The alpha component is a flavoprotein, the beta component is a hemoprotein. It depends on siroheme as a cofactor. [4Fe-4S] cluster serves as cofactor.

It catalyses the reaction hydrogen sulfide + 3 NADP(+) + 3 H2O = sulfite + 3 NADPH + 4 H(+). It participates in sulfur metabolism; hydrogen sulfide biosynthesis; hydrogen sulfide from sulfite (NADPH route): step 1/1. Its function is as follows. Component of the sulfite reductase complex that catalyzes the 6-electron reduction of sulfite to sulfide. This is one of several activities required for the biosynthesis of L-cysteine from sulfate. The sequence is that of Sulfite reductase [NADPH] hemoprotein beta-component from Methylorubrum extorquens (strain CM4 / NCIMB 13688) (Methylobacterium extorquens).